Consider the following 303-residue polypeptide: Signal recognition particle receptor FtsY (303 aa).

Residues 108 to 115 (GVNGAGKT), 190 to 194 (DTAGR), and 254 to 257 (TKLD) contribute to the GTP site.

This sequence belongs to the GTP-binding SRP family. FtsY subfamily. In terms of assembly, part of the signal recognition particle protein translocation system, which is composed of SRP and FtsY. SRP is a ribonucleoprotein composed of Ffh and a 4.5S RNA molecule.

The protein localises to the cell inner membrane. Its subcellular location is the cytoplasm. It catalyses the reaction GTP + H2O = GDP + phosphate + H(+). Involved in targeting and insertion of nascent membrane proteins into the cytoplasmic membrane. Acts as a receptor for the complex formed by the signal recognition particle (SRP) and the ribosome-nascent chain (RNC). Interaction with SRP-RNC leads to the transfer of the RNC complex to the Sec translocase for insertion into the membrane, the hydrolysis of GTP by both Ffh and FtsY, and the dissociation of the SRP-FtsY complex into the individual components. The polypeptide is Signal recognition particle receptor FtsY (Rickettsia felis (strain ATCC VR-1525 / URRWXCal2) (Rickettsia azadi)).